Consider the following 341-residue polypeptide: KH domain-containing RNA-binding protein qki.S (341 aa).

One can recognise a KH domain in the interval 88–154; the sequence is YVPVKEYPDF…WEHLNEDLHV (67 aa). The short motif at 324 to 330 is the Nuclear localization signal element; the sequence is RVHPYQR.

The protein belongs to the quaking family. In terms of assembly, homodimer; does not require RNA to homodimerize.

It is found in the nucleus. The protein localises to the cytoplasm. In terms of biological role, RNA reader protein, which recognizes and binds specific RNAs, thereby regulating RNA metabolic processes, such as pre-mRNA splicing, circular RNA (circRNA) formation, mRNA export, mRNA stability and/or translation. Involved in various cellular processes, such as mRNA storage into stress granules, apoptosis, interferon response, glial cell fate and development. Binds to the 5'-NACUAAY-N(1,20)-UAAY-3' RNA core sequence. Acts as a mRNA modification reader that specifically recognizes and binds mRNA transcripts modified by internal N(7)-methylguanine (m7G). Promotes the formation of circular RNAs (circRNAs): acts by binding to sites flanking circRNA-forming exons. CircRNAs are produced by back-splicing circularization of pre-mRNAs. Required to protect and promote stability of mRNAs which promotes oligodendrocyte differentiation. Acts as an important regulator of muscle development. Essential for notochord development. In Xenopus laevis (African clawed frog), this protein is KH domain-containing RNA-binding protein qki.S.